Consider the following 269-residue polypeptide: Shikimate dehydrogenase (NADP(+)) (269 aa).

Residues S14 to S16 and T61 each bind shikimate. K65 functions as the Proton acceptor in the catalytic mechanism. Residue E77 participates in NADP(+) binding. The shikimate site is built by N86 and D102. Residues G126 to A130, N150 to K155, and M213 each bind NADP(+). A shikimate-binding site is contributed by Y215. Residue G237 participates in NADP(+) binding.

It belongs to the shikimate dehydrogenase family. As to quaternary structure, homodimer.

The catalysed reaction is shikimate + NADP(+) = 3-dehydroshikimate + NADPH + H(+). Its pathway is metabolic intermediate biosynthesis; chorismate biosynthesis; chorismate from D-erythrose 4-phosphate and phosphoenolpyruvate: step 4/7. Its function is as follows. Involved in the biosynthesis of the chorismate, which leads to the biosynthesis of aromatic amino acids. Catalyzes the reversible NADPH linked reduction of 3-dehydroshikimate (DHSA) to yield shikimate (SA). This chain is Shikimate dehydrogenase (NADP(+)), found in Aliivibrio fischeri (strain ATCC 700601 / ES114) (Vibrio fischeri).